The chain runs to 203 residues: Outer-membrane lipoprotein LolB (203 aa).

Positions 1–16 (MKTFLPCLFFLLILVG) are cleaved as a signal peptide. The N-palmitoyl cysteine moiety is linked to residue Cys-17. Cys-17 is lipidated: S-diacylglycerol cysteine.

It belongs to the LolB family. In terms of assembly, monomer.

It is found in the cell outer membrane. Functionally, plays a critical role in the incorporation of lipoproteins in the outer membrane after they are released by the LolA protein. The chain is Outer-membrane lipoprotein LolB from Psychromonas ingrahamii (strain DSM 17664 / CCUG 51855 / 37).